We begin with the raw amino-acid sequence, 578 residues long: Maltogenic alpha-amylase (578 aa).

The protein belongs to the glycosyl hydrolase 13 family.

The catalysed reaction is hydrolysis of (1-&gt;4)-alpha-D-glucosidic linkages in polysaccharides so as to remove successive alpha-maltose residues from the non-reducing ends of the chains.. Converts starch into maltose. In contrary to other maltogenic alpha-amylases BlmA cannot hydrolyze 1,4-alpha-glucosidic linkage next to 1,6-alpha-glucosidic linkages. This chain is Maltogenic alpha-amylase (blmA), found in Bacillus licheniformis.